A 774-amino-acid chain; its full sequence is 5-methyltetrahydropteroyltriglutamate--homocysteine methyltransferase (774 aa).

5-methyltetrahydropteroyltri-L-glutamate contacts are provided by residues 23–26 and Lys-123; that span reads RELK. L-homocysteine contacts are provided by residues 446 to 448 and Glu-499; that span reads IGS. Residues 446–448 and Glu-499 contribute to the L-methionine site; that span reads IGS. Residues 530 to 531 and Trp-576 each bind 5-methyltetrahydropteroyltri-L-glutamate; that span reads RC. Asp-614 contributes to the L-homocysteine binding site. Asp-614 contributes to the L-methionine binding site. Glu-620 provides a ligand contact to 5-methyltetrahydropteroyltri-L-glutamate. Zn(2+) is bound by residues His-656, Cys-658, and Glu-680. His-709 acts as the Proton donor in catalysis. Cys-741 is a Zn(2+) binding site.

It belongs to the vitamin-B12 independent methionine synthase family. Requires Zn(2+) as cofactor.

The enzyme catalyses 5-methyltetrahydropteroyltri-L-glutamate + L-homocysteine = tetrahydropteroyltri-L-glutamate + L-methionine. Its pathway is amino-acid biosynthesis; L-methionine biosynthesis via de novo pathway; L-methionine from L-homocysteine (MetE route): step 1/1. In terms of biological role, catalyzes the transfer of a methyl group from 5-methyltetrahydrofolate to homocysteine resulting in methionine formation. In Aliivibrio fischeri (strain MJ11) (Vibrio fischeri), this protein is 5-methyltetrahydropteroyltriglutamate--homocysteine methyltransferase.